A 1485-amino-acid polypeptide reads, in one-letter code: DNA topoisomerase 2 (1485 aa).

Acidic residues predominate over residues 1 to 16 (MSIDADFSDYEDEASG). The disordered stretch occupies residues 1–76 (MSIDADFSDY…NGNGNSNVST (76 aa)). Positions 46-59 (DLRQTSLTSMTASE) are enriched in polar residues. Low complexity predominate over residues 64 to 76 (VTNNGNGNSNVST). Residues Asn-136, Asn-165, 193-195 (SSN), and 206-213 (GRNGYGAK) contribute to the ATP site. Positions 388-392 (KKENK) are interaction with DNA. 421-423 (QTK) contributes to the ATP binding site. The 115-residue stretch at 499-613 (CVLILTEGDS…SLLQIPGFLI (115 aa)) folds into the Toprim domain. Residues Glu-505, Asp-582, and Asp-584 each coordinate Mg(2+). The Topo IIA-type catalytic domain maps to 745–1195 (IPSVVDGLKP…TPKELWLHDL (451 aa)). Tyr-835 serves as the catalytic O-(5'-phospho-DNA)-tyrosine intermediate. The interaction with DNA stretch occupies residues 1019–1028 (KLSRTQATSN). The span at 1216–1225 (EEQSSRDFVN) shows a compositional bias: basic and acidic residues. The disordered stretch occupies residues 1216 to 1485 (EEQSSRDFVN…EDVDDYDESD (270 aa)). Residues 1226-1242 (RTKKKPRGKSTGTRKPR) show a composition bias toward basic residues. Polar residues predominate over residues 1260–1273 (ESKPSTTNRKQQTL). Residues 1278–1307 (ASKEPEKSSDINIVKTEDNSHGLSVEENRI) are compositionally biased toward basic and acidic residues. Ser-1310 and Ser-1345 each carry phosphoserine. Positions 1387–1396 (AKNKGKKASS) are enriched in basic residues. Positions 1413–1425 (GSSSTPKASSTNA) are enriched in polar residues. Position 1433 is a phosphoserine (Ser-1433). A compositionally biased stretch (acidic residues) spans 1473-1485 (DNDEDVDDYDESD).

This sequence belongs to the type II topoisomerase family. Homodimer. Mg(2+) is required as a cofactor. It depends on Mn(2+) as a cofactor. Ca(2+) serves as cofactor. Phosphorylated at multiple sites at both extremities of the protein.

The protein localises to the nucleus. It catalyses the reaction ATP-dependent breakage, passage and rejoining of double-stranded DNA.. Functionally, control of topological states of DNA by transient breakage and subsequent rejoining of DNA strands. Topoisomerase II makes double-strand breaks. This is DNA topoisomerase 2 (top2) from Schizosaccharomyces pombe (strain 972 / ATCC 24843) (Fission yeast).